A 191-amino-acid chain; its full sequence is UPF0312 protein Sden_2128 (191 aa).

A signal peptide spans 1–22 (MKKHLLASLLGASLLLPTAVNA).

The protein belongs to the UPF0312 family. Type 1 subfamily.

It localises to the periplasm. This Shewanella denitrificans (strain OS217 / ATCC BAA-1090 / DSM 15013) protein is UPF0312 protein Sden_2128.